The sequence spans 325 residues: Beta-ketoacyl-[acyl-carrier-protein] synthase III (325 aa).

Catalysis depends on residues Cys-119 and His-252. The ACP-binding stretch occupies residues Gln-253–Arg-257. The active site involves Asn-282.

This sequence belongs to the thiolase-like superfamily. FabH family. In terms of assembly, homodimer.

The protein localises to the cytoplasm. It carries out the reaction malonyl-[ACP] + acetyl-CoA + H(+) = 3-oxobutanoyl-[ACP] + CO2 + CoA. It functions in the pathway lipid metabolism; fatty acid biosynthesis. Functionally, catalyzes the condensation reaction of fatty acid synthesis by the addition to an acyl acceptor of two carbons from malonyl-ACP. Catalyzes the first condensation reaction which initiates fatty acid synthesis and may therefore play a role in governing the total rate of fatty acid production. Possesses both acetoacetyl-ACP synthase and acetyl transacylase activities. Its substrate specificity determines the biosynthesis of branched-chain and/or straight-chain of fatty acids. In Polaromonas naphthalenivorans (strain CJ2), this protein is Beta-ketoacyl-[acyl-carrier-protein] synthase III.